Here is a 188-residue protein sequence, read N- to C-terminus: Elongation factor P (188 aa).

This sequence belongs to the elongation factor P family.

The protein localises to the cytoplasm. The protein operates within protein biosynthesis; polypeptide chain elongation. Functionally, involved in peptide bond synthesis. Stimulates efficient translation and peptide-bond synthesis on native or reconstituted 70S ribosomes in vitro. Probably functions indirectly by altering the affinity of the ribosome for aminoacyl-tRNA, thus increasing their reactivity as acceptors for peptidyl transferase. This chain is Elongation factor P, found in Christiangramia forsetii (strain DSM 17595 / CGMCC 1.15422 / KT0803) (Gramella forsetii).